The sequence spans 1094 residues: Formin-like protein 1 (1094 aa).

Disordered stretches follow at residues 1–29, 173–199, and 507–627; these read MGNA…KQPM, SGAE…VPKS, and AATP…GVKA. The N-myristoyl glycine moiety is linked to residue Gly-2. Residue Ser-7 is modified to Phosphoserine. Pro residues predominate over residues 16 to 28; the sequence is ASPPKQPAVPKQP. Positions 27–464 constitute a GBD/FH3 domain; the sequence is QPMPAAGELE…SRRIPEPEKV (438 aa). Ser-184 is subject to Phosphoserine. Over residues 519–529 the composition is skewed to polar residues; that stretch reads RVSTDSPSTAE. Composition is skewed to pro residues over residues 535–549 and 559–610; these read ASPP…PPLP and PSAP…PGGP. Residues 627-1018 form the FH2 domain; the sequence is AKKPIQTKFR…DTSGREEPPT (392 aa). Ser-688 bears the Phosphoserine mark. The span at 1002–1017 shows a compositional bias: basic and acidic residues; it reads WKKEAAADTSGREEPP. The tract at residues 1002-1094 is disordered; sequence WKKEAAADTS…PLPVTTDLAL (93 aa). Position 1021 is a phosphoserine (Ser-1021). Residues 1049–1082 form the DAD domain; that stretch reads SDRDGAIEDIITDLRNQPYIRADTGRRSARRRPP.

This sequence belongs to the formin homology family. As to quaternary structure, interacts with RAC1, PFN1 and PFN2. Interacts (activated by RAC1) with SRGAP2 (via SH3 domain); regulates the actin filament severing activity of FMNL1. In terms of processing, myristoylation mediates membrane localization. In terms of tissue distribution, highly expressed in the spleen, lymph node and bone marrow cells.

The protein localises to the cytoplasm. It localises to the cell membrane. It is found in the cytoplasmic vesicle. The protein resides in the phagosome. Plays a role in the regulation of cell morphology and cytoskeletal organization. Required in the cortical actin filament dynamics and cell shape. May play a role in the control of cell motility and survival of macrophages. The protein is Formin-like protein 1 (Fmnl1) of Mus musculus (Mouse).